The chain runs to 153 residues: Aspartate carbamoyltransferase regulatory chain (153 aa).

Cys108, Cys113, Cys137, and Cys140 together coordinate Zn(2+).

It belongs to the PyrI family. As to quaternary structure, contains catalytic and regulatory chains. Requires Zn(2+) as cofactor.

Functionally, involved in allosteric regulation of aspartate carbamoyltransferase. This is Aspartate carbamoyltransferase regulatory chain from Methanosphaera stadtmanae (strain ATCC 43021 / DSM 3091 / JCM 11832 / MCB-3).